The chain runs to 1096 residues: Protein EMBRYONIC FLOWER 1 (1096 aa).

8 disordered regions span residues 155–189 (KARG…EKLN), 274–296 (KTSG…VRGR), 315–348 (GATS…KGKQ), 366–420 (ETSQ…KKPV), 563–612 (LSRV…DIPM), 629–651 (DKEE…KNAL), 1007–1032 (DKEK…KNSS), and 1070–1096 (FKKK…TQNA). 2 short sequence motifs (nuclear localization signal) span residues 170 to 177 (SRKLVSPE) and 281 to 288 (IRKEESAL). The span at 281-294 (IRKEESALKKESVR) shows a compositional bias: basic and acidic residues. A compositionally biased stretch (polar residues) spans 315–337 (GATSENASKSCDSDQGNSESTDS). The segment at 337–617 (SGFDRTPFKG…DDIPMEIVEL (281 aa)) is DNA-binding. Basic and acidic residues predominate over residues 371–381 (GIKEHDADPSK). Over residues 382–394 (RSTPAHSLFTGND) the composition is skewed to polar residues. Over residues 572 to 601 (SGADRKGKTVMVQEHHGAPRSQSHDRKETT) the composition is skewed to basic and acidic residues. Residues 866–1096 (LDPRLRSTTP…KPVCPPTQNA (231 aa)) are DNA-binding. Residues 1018-1032 (SCNNNASAGPVKNSS) are compositionally biased toward polar residues. Residues 1071–1078 (KKKPAVCK) carry the Nuclear localization signal 3 motif.

Interacts with MSI1. Expressed in mature embryo, root tips, cotyledons, leaves, stems, shoot apex, and flower clusters, with highest levels in flowers. The presence in the shoot apical meristem (SAM) is required to maintain vegetative development and prevent early flowering.

Its subcellular location is the nucleus. Its function is as follows. Transcription repressor that regulates phase transition during shoot, flower and seeds development. Controls leaves development, shoot architecture and flowering by delaying both the vegetative to reproductive transition and flower initiation. Participates in polycomb group (PcG) protein complex-mediated (including EMF2) silencing of the flower homeotic genes AGAMOUS (AG), PISTILLATA (PI), and APETALA3 (AP3), as well as of some regulatory genes such as ABSCISIC ACID INSENSITIVE3 (ABI3), LONG VEGETATIVE PHASE1 (LOV1), and FLOWERING LOCUS C (FLC) during vegetative development. Required for histone methylation or for maintaining a stable histone methylation (e.g. H3K27me3) pattern of repressed target genes (including genes involved in salt stress response and flower development); this repression is counteracted by ULT1. Can bind non specifically DNA (both double- and single-stranded) and RNA. This Arabidopsis thaliana (Mouse-ear cress) protein is Protein EMBRYONIC FLOWER 1.